A 333-amino-acid chain; its full sequence is Ribosomal RNA small subunit methyltransferase H (333 aa).

S-adenosyl-L-methionine contacts are provided by residues 36 to 38 (GGY), D54, F81, D102, and Q109.

Belongs to the methyltransferase superfamily. RsmH family.

The protein resides in the cytoplasm. The enzyme catalyses cytidine(1402) in 16S rRNA + S-adenosyl-L-methionine = N(4)-methylcytidine(1402) in 16S rRNA + S-adenosyl-L-homocysteine + H(+). Functionally, specifically methylates the N4 position of cytidine in position 1402 (C1402) of 16S rRNA. This chain is Ribosomal RNA small subunit methyltransferase H, found in Afipia carboxidovorans (strain ATCC 49405 / DSM 1227 / KCTC 32145 / OM5) (Oligotropha carboxidovorans).